Consider the following 162-residue polypeptide: Cytochrome c-type biogenesis protein CcmE (162 aa).

The Cytoplasmic segment spans residues Met1–Arg8. The helical; Signal-anchor for type II membrane protein transmembrane segment at Leu9–Ala29 threads the bilayer. The Periplasmic portion of the chain corresponds to Leu30–Lys162. Heme contacts are provided by His124 and Tyr128. Basic and acidic residues predominate over residues Asp139–Asn148. Residues Asp139–Lys162 form a disordered region.

This sequence belongs to the CcmE/CycJ family.

It is found in the cell inner membrane. Heme chaperone required for the biogenesis of c-type cytochromes. Transiently binds heme delivered by CcmC and transfers the heme to apo-cytochromes in a process facilitated by CcmF and CcmH. The polypeptide is Cytochrome c-type biogenesis protein CcmE (Pseudomonas paraeruginosa (strain DSM 24068 / PA7) (Pseudomonas aeruginosa (strain PA7))).